Consider the following 270-residue polypeptide: SAGA-associated factor 29 homolog A (270 aa).

Serine 2 bears the N-acetylserine mark. The interval 85 to 113 is disordered; the sequence is LPSGPTGQQRRKLEGNEQKRKRMKVDTDV. The segment covering 95 to 113 has biased composition (basic and acidic residues); it reads RKLEGNEQKRKRMKVDTDV. Residues 125 to 270 enclose the SGF29 C-terminal domain; sequence EAYASLKGEQ…VVALPEGHRQ (146 aa). Histone H3K4me3 N-terminus binding stretches follow at residues 168–170 and 217–220; these read DEE and GTTA. Residues 242 to 245 are histone H3K4me3 binding; it reads FDDD.

The protein belongs to the SGF29 family. In terms of tissue distribution, expressed in roots, rosette leaves, cauline leaves, stems and flowers.

The protein localises to the nucleus. In terms of biological role, chromatin reader component of the transcription regulatory histone acetylation (HAT) complex SAGA. Involved in salt stress tolerance. Enhances the effect of ADA2B in the positive regulation of salt-induced gene expression. The sequence is that of SAGA-associated factor 29 homolog A from Arabidopsis thaliana (Mouse-ear cress).